Consider the following 140-residue polypeptide: Small ribosomal subunit protein uS12 (140 aa).

The disordered stretch occupies residues 33-55 (KEQTNVSSPQKRGVCTRVGTMTP).

The protein belongs to the universal ribosomal protein uS12 family. As to quaternary structure, part of the 30S ribosomal subunit. Contacts proteins S8 and S17. May interact with IF1 in the 30S initiation complex.

Functionally, with S4 and S5 plays an important role in translational accuracy. Its function is as follows. Interacts with and stabilizes bases of the 16S rRNA that are involved in tRNA selection in the A site and with the mRNA backbone. Located at the interface of the 30S and 50S subunits, it traverses the body of the 30S subunit contacting proteins on the other side and probably holding the rRNA structure together. The combined cluster of proteins S8, S12 and S17 appears to hold together the shoulder and platform of the 30S subunit. This chain is Small ribosomal subunit protein uS12, found in Geobacillus kaustophilus (strain HTA426).